Reading from the N-terminus, the 301-residue chain is Ribonuclease H2 subunit A (301 aa).

An N-acetylmethionine modification is found at Met1. Residues 28-251 (PCVLGVDEAG…AQAILEKEAE (224 aa)) form the RNase H type-2 domain. A divalent metal cation-binding residues include Asp34, Glu35, and Asp142. Residue Thr217 is modified to Phosphothreonine. A compositionally biased stretch (acidic residues) spans 255–264 (WEDSEAEEDP). The tract at residues 255–284 (WEDSEAEEDPERPGKITSYFSQGPQTCRPQ) is disordered. A Phosphoserine modification is found at Ser258. Polar residues predominate over residues 272 to 282 (SYFSQGPQTCR).

This sequence belongs to the RNase HII family. Eukaryotic subfamily. In terms of assembly, the RNase H2 complex is a heterotrimer composed of the catalytic subunit RNASEH2A and the non-catalytic subunits RNASEH2B and RNASEH2C. Requires Mn(2+) as cofactor. The cofactor is Mg(2+).

Its subcellular location is the nucleus. The catalysed reaction is Endonucleolytic cleavage to 5'-phosphomonoester.. Its function is as follows. Catalytic subunit of RNase HII, an endonuclease that specifically degrades the RNA of RNA:DNA hybrids. Participates in DNA replication, possibly by mediating the removal of lagging-strand Okazaki fragment RNA primers during DNA replication. Mediates the excision of single ribonucleotides from DNA:RNA duplexes. The protein is Ribonuclease H2 subunit A (Rnaseh2a) of Mus musculus (Mouse).